Reading from the N-terminus, the 32-residue chain is Sodium channel neurotoxin BmK NT2 (32 aa).

Positions 2 to 32 constitute an LCN-type CS-alpha/beta domain; the sequence is RDAYIAKPENCVYHCAGNEGCNNLCTCNGAT.

Expressed by the venom gland.

The protein resides in the secreted. Its function is as follows. Alpha toxins bind voltage-independently at site-3 of sodium channels (Nav) and inhibit the inactivation of the activated channels, thereby blocking neuronal transmission. This toxin dose-dependently delays inactivation of voltage-gated sodium channels (Nav) (EC(50)=0.91 uM), and shifts the steady-state activation and inactivation to hyperpolarized direction. In addition, it dose-dependently alters calcium dynamics and increases phosphorylation of MAP kinases 1/3 (MAPK1/MAPK3) and cAMP-response element binding (CREB) proteins in neocortical neurons. This effect is eliminated by tetrodotoxin, a Nav blocker. The protein is Sodium channel neurotoxin BmK NT2 of Olivierus martensii (Manchurian scorpion).